The chain runs to 602 residues: Major facilitator superfamily multidrug transporter mfsB (602 aa).

A run of 12 helical transmembrane segments spans residues 29-49, 67-87, 98-118, 128-148, 160-180, 201-221, 329-349, 378-398, 411-431, 439-459, 468-486, and 505-525; these read FVLA…FPYV, LYAG…GMFW, PVLI…GFAP, ALGG…AEIV, IMPF…GALA, FLLP…VGFL, IVAY…IPVF, FMLA…FPFV, VLLV…LPSI, LALI…AILL, VLGS…SRAL, and IIAW…SFWM. Positions 527–602 are disordered; it reads ESEPRRDSEK…RSNPLAFAED (76 aa). Residues 528–538 are compositionally biased toward basic and acidic residues; the sequence is SEPRRDSEKAG.

This sequence belongs to the major facilitator superfamily.

It localises to the membrane. Functionally, major facilitator superfamily transporter that may be involved in A.fumigatus adaptation to azoles such as vorizonazole. The protein is Major facilitator superfamily multidrug transporter mfsB of Aspergillus fumigatus (strain ATCC MYA-4609 / CBS 101355 / FGSC A1100 / Af293) (Neosartorya fumigata).